The chain runs to 424 residues: Serine--tRNA ligase (424 aa).

233 to 235 is a binding site for L-serine; that stretch reads TAE. 264–266 is a binding site for ATP; sequence RRE. Glu-287 contacts L-serine. 351–354 is a binding site for ATP; that stretch reads EISS. Ser-386 is a binding site for L-serine.

It belongs to the class-II aminoacyl-tRNA synthetase family. Type-1 seryl-tRNA synthetase subfamily. In terms of assembly, homodimer. The tRNA molecule binds across the dimer.

Its subcellular location is the cytoplasm. The catalysed reaction is tRNA(Ser) + L-serine + ATP = L-seryl-tRNA(Ser) + AMP + diphosphate + H(+). The enzyme catalyses tRNA(Sec) + L-serine + ATP = L-seryl-tRNA(Sec) + AMP + diphosphate + H(+). Its pathway is aminoacyl-tRNA biosynthesis; selenocysteinyl-tRNA(Sec) biosynthesis; L-seryl-tRNA(Sec) from L-serine and tRNA(Sec): step 1/1. Its function is as follows. Catalyzes the attachment of serine to tRNA(Ser). Is also able to aminoacylate tRNA(Sec) with serine, to form the misacylated tRNA L-seryl-tRNA(Sec), which will be further converted into selenocysteinyl-tRNA(Sec). This Pseudothermotoga lettingae (strain ATCC BAA-301 / DSM 14385 / NBRC 107922 / TMO) (Thermotoga lettingae) protein is Serine--tRNA ligase.